Reading from the N-terminus, the 532-residue chain is Putative 57 kDa heat shock protein (532 aa).

2 consecutive sHSP domains span residues 25–134 and 439–532; these read VNGP…CKIT and SVLE…IPSN.

This sequence belongs to the small heat shock protein (HSP20) family.

This is Putative 57 kDa heat shock protein from Arabidopsis thaliana (Mouse-ear cress).